An 89-amino-acid polypeptide reads, in one-letter code: Putative defensin-like protein 89 (89 aa).

The first 25 residues, 1–25 (MGFKNNLSLVSVMVFALILLPMISG), serve as a signal peptide directing secretion. 4 cysteine pairs are disulfide-bonded: Cys30/Cys66, Cys36/Cys57, Cys42/Cys64, and Cys46/Cys65.

It belongs to the DEFL family.

The protein resides in the secreted. The protein is Putative defensin-like protein 89 of Arabidopsis thaliana (Mouse-ear cress).